The chain runs to 392 residues: Phospho-N-acetylmuramoyl-pentapeptide-transferase (392 aa).

The next 11 helical transmembrane spans lie at 24–44 (YLTL…LIAG), 76–96 (TMGG…WFDL), 100–120 (FVWI…VDDW), 137–157 (YFWQ…SISE), 167–187 (FITW…GLLV), 193–213 (VSYP…IVGS), 225–245 (GLAI…AYVT), 262–282 (SGEL…FLWF), 289–309 (VFMG…IAVI), 314–334 (IVLA…MLQV), and 369–389 (QVVV…LTTL).

This sequence belongs to the glycosyltransferase 4 family. MraY subfamily. Mg(2+) is required as a cofactor.

Its subcellular location is the cell inner membrane. The enzyme catalyses UDP-N-acetyl-alpha-D-muramoyl-L-alanyl-gamma-D-glutamyl-meso-2,6-diaminopimeloyl-D-alanyl-D-alanine + di-trans,octa-cis-undecaprenyl phosphate = di-trans,octa-cis-undecaprenyl diphospho-N-acetyl-alpha-D-muramoyl-L-alanyl-D-glutamyl-meso-2,6-diaminopimeloyl-D-alanyl-D-alanine + UMP. Its pathway is cell wall biogenesis; peptidoglycan biosynthesis. Its function is as follows. Catalyzes the initial step of the lipid cycle reactions in the biosynthesis of the cell wall peptidoglycan: transfers peptidoglycan precursor phospho-MurNAc-pentapeptide from UDP-MurNAc-pentapeptide onto the lipid carrier undecaprenyl phosphate, yielding undecaprenyl-pyrophosphoryl-MurNAc-pentapeptide, known as lipid I. The protein is Phospho-N-acetylmuramoyl-pentapeptide-transferase of Acidovorax ebreus (strain TPSY) (Diaphorobacter sp. (strain TPSY)).